We begin with the raw amino-acid sequence, 424 residues long: UPF0597 protein SO_1403 (424 aa).

This sequence belongs to the UPF0597 family.

This Shewanella oneidensis (strain ATCC 700550 / JCM 31522 / CIP 106686 / LMG 19005 / NCIMB 14063 / MR-1) protein is UPF0597 protein SO_1403.